A 136-amino-acid polypeptide reads, in one-letter code: MARTKQTARKNVGGKAPRKHIGQKSARKTASTTAGMKKPHRYRPGTVALREIRRYQKSTELLIRKLPFQRLVREIAQEFKGDLRFQSSAVLALQEAAEAYLVSLFEDTNLCAIHAKRVTIMPKDMQLARRIRGERS.

Positions 1-43 are disordered; it reads MARTKQTARKNVGGKAPRKHIGQKSARKTASTTAGMKKPHRYR. Lysine 10 is modified (N6-methylated lysine). N6-acetyllysine occurs at positions 15 and 24. The segment covering 16–27 has biased composition (basic residues); that stretch reads APRKHIGQKSAR. Residues lysine 28 and lysine 37 each carry the N6-methylated lysine modification.

This sequence belongs to the histone H3 family. As to quaternary structure, the nucleosome is a histone octamer containing two molecules each of H2A, H2B, H3 and H4 assembled in one H3-H4 heterotetramer and two H2A-H2B heterodimers. The octamer wraps approximately 147 bp of DNA.

The protein resides in the nucleus. It is found in the chromosome. Functionally, core component of nucleosome. Nucleosomes wrap and compact DNA into chromatin, limiting DNA accessibility to the cellular machineries which require DNA as a template. Histones thereby play a central role in transcription regulation, DNA repair, DNA replication and chromosomal stability. DNA accessibility is regulated via a complex set of post-translational modifications of histones, also called histone code, and nucleosome remodeling. The sequence is that of Histone H3 from Euplotes crassus.